Consider the following 478-residue polypeptide: Methionine aminopeptidase 2 (478 aa).

Positions 1–123 (MAGVEEASSF…DPPSVPICDL (123 aa)) are disordered. Ala2 carries the post-translational modification N-acetylalanine. A compositionally biased stretch (basic residues) spans 36–46 (KKKRRKKKKGK). Residues 55–79 (ELDKESGTSVDEVAKQLERQALEEK) are compositionally biased toward basic and acidic residues. Ser60 and Ser63 each carry phosphoserine; alternate. O-linked (GlcNAc) serine; alternate glycans are attached at residues Ser60 and Ser63. Positions 80 to 92 (EKDDDDEDGDGDG) are enriched in acidic residues. The segment covering 97–109 (GKKKKKKKKKRGP) has biased composition (basic residues). His231 serves as a coordination point for substrate. The a divalent metal cation site is built by Asp251, Asp262, and His331. His339 contributes to the substrate binding site. 2 residues coordinate a divalent metal cation: Glu364 and Glu459.

It belongs to the peptidase M24A family. Methionine aminopeptidase eukaryotic type 2 subfamily. As to quaternary structure, binds EIF2S1 at low magnesium concentrations. Interacts strongly with the eIF-2 gamma-subunit EIF2S3. Co(2+) serves as cofactor. Requires Zn(2+) as cofactor. The cofactor is Mn(2+). Fe(2+) is required as a cofactor. In terms of processing, O-glycosylated; contains 12 O-linked GlcNAc. Post-translationally, contains approximately 12 O-linked N-acetylglucosamine (GlcNAc) residues. O-glycosylation is required for EIF2S1 binding.

The protein resides in the cytoplasm. It catalyses the reaction Release of N-terminal amino acids, preferentially methionine, from peptides and arylamides.. Its function is as follows. Cotranslationally removes the N-terminal methionine from nascent proteins. The N-terminal methionine is often cleaved when the second residue in the primary sequence is small and uncharged (Met-Ala-, Cys, Gly, Pro, Ser, Thr, or Val). In terms of biological role, protects eukaryotic initiation factor EIF2S1 from translation-inhibiting phosphorylation by inhibitory kinases such as EIF2AK2/PKR and EIF2AK1/HCR. Plays a critical role in the regulation of protein synthesis. This chain is Methionine aminopeptidase 2 (Metap2), found in Rattus norvegicus (Rat).